The following is a 336-amino-acid chain: F420-dependent glucose-6-phosphate dehydrogenase (336 aa).

D39 is a binding site for coenzyme F420-(gamma-Glu)n. Residue H40 is the Proton donor of the active site. Coenzyme F420-(gamma-Glu)n-binding positions include T76 and 107–108 (TG). E109 serves as the catalytic Proton acceptor. Coenzyme F420-(gamma-Glu)n is bound by residues N112, 177–178 (GG), and 180–181 (VV). Substrate is bound by residues T195, K198, K259, and R283.

The protein belongs to the F420-dependent glucose-6-phosphate dehydrogenase family. In terms of assembly, homodimer.

It carries out the reaction oxidized coenzyme F420-(gamma-L-Glu)(n) + D-glucose 6-phosphate + H(+) = 6-phospho-D-glucono-1,5-lactone + reduced coenzyme F420-(gamma-L-Glu)(n). Catalyzes the coenzyme F420-dependent oxidation of glucose 6-phosphate (G6P) to 6-phosphogluconolactone. Appears to have a role in resistance to oxidative stress, via its consumption of G6P that serves as a source of reducing power to combat oxidative stress in mycobacteria. This Mycolicibacterium fortuitum (Mycobacterium fortuitum) protein is F420-dependent glucose-6-phosphate dehydrogenase.